The sequence spans 394 residues: Elongation factor Tu (394 aa).

Residues lysine 10–isoleucine 204 enclose the tr-type G domain. The tract at residues glycine 19 to threonine 26 is G1. Glycine 19–threonine 26 is a binding site for GTP. Position 26 (threonine 26) interacts with Mg(2+). The segment at glycine 60–serine 64 is G2. The interval aspartate 81 to glycine 84 is G3. Residues aspartate 81–histidine 85 and asparagine 136–aspartate 139 contribute to the GTP site. Residues asparagine 136–aspartate 139 are G4. Residues serine 174 to leucine 176 form a G5 region.

The protein belongs to the TRAFAC class translation factor GTPase superfamily. Classic translation factor GTPase family. EF-Tu/EF-1A subfamily. Monomer.

It is found in the cytoplasm. The catalysed reaction is GTP + H2O = GDP + phosphate + H(+). Functionally, GTP hydrolase that promotes the GTP-dependent binding of aminoacyl-tRNA to the A-site of ribosomes during protein biosynthesis. This Rickettsia prowazekii (strain Madrid E) protein is Elongation factor Tu.